A 61-amino-acid chain; its full sequence is Arabinogalactan protein 15 (61 aa).

An N-terminal signal peptide occupies residues Met-1–Ala-22. At Gln-23 the chain carries Pyrrolidone carboxylic acid. 4-hydroxyproline occurs at positions 27, 29, and 31. 3 O-linked (Ara...) hydroxyproline glycosylation sites follow: Pro-27, Pro-29, and Pro-31. A lipid anchor (GPI-anchor amidated serine) is attached at Ser-35. A propeptide spans Ser-36–Ile-61 (removed in mature form).

It belongs to the AG-peptide AGP family. Post-translationally, contains 4-hydroxyproline; hydroxylated on Pro-27, Pro-29 and Pro-31. O-glycosylated on hydroxyprolines; noncontiguous hydroxylproline residues are glycosylated with arabinogalactan. As to expression, expressed in reproductive tissues. Expressed in chalaza, funiculus, stigma, septum, style, integument and transmitting tract.

Its subcellular location is the cell membrane. Proteoglycan that seems to be implicated in diverse developmental roles such as differentiation, cell-cell recognition, embryogenesis and programmed cell death. The polypeptide is Arabinogalactan protein 15 (Arabidopsis thaliana (Mouse-ear cress)).